The following is a 278-amino-acid chain: S-adenosylmethionine decarboxylase proenzyme (278 aa).

Residues leucine 96–serine 115 form a disordered region. Serine 126 acts as the Schiff-base intermediate with substrate; via pyruvic acid in catalysis. Serine 126 carries the pyruvic acid (Ser); by autocatalysis modification. Residue histidine 131 is the Proton acceptor; for processing activity of the active site. Cysteine 154 functions as the Proton donor; for catalytic activity in the catalytic mechanism.

The protein belongs to the prokaryotic AdoMetDC family. Type 2 subfamily. As to quaternary structure, heterooctamer of four alpha and four beta chains arranged as a tetramer of alpha/beta heterodimers. Requires pyruvate as cofactor. Post-translationally, is synthesized initially as an inactive proenzyme. Formation of the active enzyme involves a self-maturation process in which the active site pyruvoyl group is generated from an internal serine residue via an autocatalytic post-translational modification. Two non-identical subunits are generated from the proenzyme in this reaction, and the pyruvate is formed at the N-terminus of the alpha chain, which is derived from the carboxyl end of the proenzyme. The post-translation cleavage follows an unusual pathway, termed non-hydrolytic serinolysis, in which the side chain hydroxyl group of the serine supplies its oxygen atom to form the C-terminus of the beta chain, while the remainder of the serine residue undergoes an oxidative deamination to produce ammonia and the pyruvoyl group blocking the N-terminus of the alpha chain.

It catalyses the reaction S-adenosyl-L-methionine + H(+) = S-adenosyl 3-(methylsulfanyl)propylamine + CO2. Its pathway is amine and polyamine biosynthesis; S-adenosylmethioninamine biosynthesis; S-adenosylmethioninamine from S-adenosyl-L-methionine: step 1/1. Functionally, catalyzes the decarboxylation of S-adenosylmethionine to S-adenosylmethioninamine (dcAdoMet), the propylamine donor required for the synthesis of the polyamines spermine and spermidine from the diamine putrescine. This chain is S-adenosylmethionine decarboxylase proenzyme, found in Alkaliphilus metalliredigens (strain QYMF).